Reading from the N-terminus, the 396-residue chain is NADH-quinone oxidoreductase subunit D (396 aa).

It belongs to the complex I 49 kDa subunit family. NDH-1 is composed of 14 different subunits. Subunits NuoB, C, D, E, F, and G constitute the peripheral sector of the complex.

The protein resides in the cell inner membrane. It catalyses the reaction a quinone + NADH + 5 H(+)(in) = a quinol + NAD(+) + 4 H(+)(out). In terms of biological role, NDH-1 shuttles electrons from NADH, via FMN and iron-sulfur (Fe-S) centers, to quinones in the respiratory chain. The immediate electron acceptor for the enzyme in this species is believed to be ubiquinone. Couples the redox reaction to proton translocation (for every two electrons transferred, four hydrogen ions are translocated across the cytoplasmic membrane), and thus conserves the redox energy in a proton gradient. This Agrobacterium fabrum (strain C58 / ATCC 33970) (Agrobacterium tumefaciens (strain C58)) protein is NADH-quinone oxidoreductase subunit D.